An 811-amino-acid chain; its full sequence is MAPILFLPILQILLIYCTKSAQAQLNISIGSSLTPQEVNNSWISPSSDFAFGFRAVDGNSSSYLLAVWFNKIADKTVIWYAKTSSNGQDDTIPVQVQSGSVLKLADGALSLRDPSGNEVWNPRVTDVGYARMLNTGNFRLLGTDGATKWESFGDPSDTILPTQVLPLGTALHSRLLATDYSNGRFQLNVQDDGNLVLYLVAVPSAYYHDPYWASNTVGNGSQLVFNETGRIYFTLTNGSQINITSAGVDSMGDFFHRATLDTDGVFRQYIYPKSKQARSLWQEQWRAVDALPENICQTIQTKVGSGACGFNSYCTFDGTKNTTNCLCPQRYKFFDNERTYKGCRPDFEPQSCDLDETAAMVQYEMTPIDRINWPLSDYEQYSPIDETECRRLCVIDCFCSVAVFNKPSNTCYKKKLPLSNGNMDSSLQATVLLKVPRSTNSPSMISSGSSKWKKDKKYWILGSSLFFGSSVLVNFLLIFVLLFGTYCSITSRKKTQLSQLPSNSGLPSKIFTYRELEKATGGFHEVLGTGASGIVYKGQLQDECGTNIAVKKIEKLQQEAQKEFLVEVQTIGQTFHRNLVRLLGFCNEGTEKLLVYEFMSNGSLNTFLFNDTHPHWSLRVQVALGVSRGLLYLHEECNKQIIHCDMKPQNILLDDNFVAKISDFGLAKLLPVNQTQTNTGIRGTRGYVAPEWFKNIGITSKVDVYSFGVILLELVCCRKNVELEVADEEQTILTYWANDCYRCGRIDLLVAGDDEAIFNIKKVERFVAVALWCLQEEPSMRPTMHKVMQMLDGAVQIPTPPDPSSYISSLA.

The signal sequence occupies residues 1–23 (MAPILFLPILQILLIYCTKSAQA). Residues 24-153 (QLNISIGSSL…DGATKWESFG (130 aa)) enclose the Bulb-type lectin domain. Topologically, residues 24–464 (QLNISIGSSL…DKKYWILGSS (441 aa)) are extracellular. N-linked (GlcNAc...) asparagine glycans are attached at residues asparagine 26, asparagine 39, asparagine 59, asparagine 219, asparagine 226, asparagine 237, and asparagine 242. In terms of domain architecture, EGF-like; atypical spans 292–344 (PENICQTIQTKVGSGACGFNSYCTFDGTKNTTNCLCPQRYKFFDNERTYKGCR). Intrachain disulfides connect cysteine 296–cysteine 314, cysteine 308–cysteine 325, cysteine 327–cysteine 343, cysteine 389–cysteine 411, and cysteine 393–cysteine 399. N-linked (GlcNAc...) asparagine glycosylation occurs at asparagine 321. In terms of domain architecture, PAN spans 352–436 (CDLDETAAMV…LQATVLLKVP (85 aa)). A helical transmembrane segment spans residues 465 to 485 (LFFGSSVLVNFLLIFVLLFGT). Residues 486–811 (YCSITSRKKT…DPSSYISSLA (326 aa)) are Cytoplasmic-facing. Residues 521-795 (GGFHEVLGTG…KVMQMLDGAV (275 aa)) enclose the Protein kinase domain. ATP-binding positions include 527–535 (LGTGASGIV) and lysine 551. Catalysis depends on aspartate 645, which acts as the Proton acceptor.

The protein belongs to the protein kinase superfamily. Ser/Thr protein kinase family.

The protein resides in the membrane. The enzyme catalyses L-seryl-[protein] + ATP = O-phospho-L-seryl-[protein] + ADP + H(+). The catalysed reaction is L-threonyl-[protein] + ATP = O-phospho-L-threonyl-[protein] + ADP + H(+). Its function is as follows. Involved in resistance against the herbivorous insect brown planthopper (N.lugens, BPH). Member of the BPH3 (BPH resistance locus 3) cluster which contains LECRK1, LECRK2 and LECRK3. The protein is G-type lectin S-receptor-like serine/threonine-protein kinase LECRK2 of Oryza sativa subsp. indica (Rice).